The sequence spans 75 residues: Small ribosomal subunit protein bS18 (75 aa).

It belongs to the bacterial ribosomal protein bS18 family. Part of the 30S ribosomal subunit. Forms a tight heterodimer with protein bS6.

Its function is as follows. Binds as a heterodimer with protein bS6 to the central domain of the 16S rRNA, where it helps stabilize the platform of the 30S subunit. In Mycoplasma capricolum subsp. capricolum (strain California kid / ATCC 27343 / NCTC 10154), this protein is Small ribosomal subunit protein bS18.